The primary structure comprises 1923 residues: Nuclear pore complex protein GP210 (1923 aa).

An N-terminal signal peptide occupies residues 1–22 (MVPVSFCFFFLLLLLSAGESSS). N-linked (GlcNAc...) asparagine glycosylation is found at asparagine 73, asparagine 117, asparagine 289, asparagine 609, asparagine 863, asparagine 903, asparagine 967, asparagine 982, asparagine 1171, asparagine 1199, asparagine 1550, asparagine 1568, and asparagine 1743. The BIG2 domain maps to 1152-1205 (IFLVPGASYVLTIEGGPTMNVSVDYTTVDNEVAKIEKSGRLYATSPGNTTIYAT). Residues 1829–1849 (SVLLKILWGVLVLVVSVIILM) traverse the membrane as a helical segment.

Belongs to the NUP210 family. In terms of assembly, part of the nuclear pore complex (NPC). The NPC has an eight-fold symmetrical structure comprising a central transport channel and two rings, the cytoplasmic and nuclear rings, to which eight filaments are attached. The cytoplasmic filaments have loose ends, while the nuclear filaments are joined in a distal ring, forming a nuclear basket. NPCs are highly dynamic in configuration and composition, and can be devided in 3 subcomplexes, the NUP62 subcomplex, the NUP107-160 subcomplex and the NUP93 subcomplex, containing approximately 30 different nucleoporin proteins.

It is found in the nucleus envelope. Its subcellular location is the nucleus membrane. The protein resides in the nucleus. The protein localises to the nuclear pore complex. This Arabidopsis thaliana (Mouse-ear cress) protein is Nuclear pore complex protein GP210.